A 441-amino-acid polypeptide reads, in one-letter code: Ribulose bisphosphate carboxylase large chain (441 aa).

Substrate contacts are provided by Asn-89 and Thr-139. Lys-141 functions as the Proton acceptor in the catalytic mechanism. Lys-143 is a binding site for substrate. Mg(2+) contacts are provided by Lys-167, Asp-169, and Glu-170. At Lys-167 the chain carries N6-carboxylysine. His-260 (proton acceptor) is an active-site residue. Residues Arg-261, His-293, and Ser-345 each coordinate substrate.

Belongs to the RuBisCO large chain family. Type I subfamily. As to quaternary structure, heterohexadecamer of 8 large chains and 8 small chains; disulfide-linked. The disulfide link is formed within the large subunit homodimers. Mg(2+) serves as cofactor. The disulfide bond which can form in the large chain dimeric partners within the hexadecamer appears to be associated with oxidative stress and protein turnover.

It is found in the plastid. Its subcellular location is the chloroplast. The enzyme catalyses 2 (2R)-3-phosphoglycerate + 2 H(+) = D-ribulose 1,5-bisphosphate + CO2 + H2O. It catalyses the reaction D-ribulose 1,5-bisphosphate + O2 = 2-phosphoglycolate + (2R)-3-phosphoglycerate + 2 H(+). Functionally, ruBisCO catalyzes two reactions: the carboxylation of D-ribulose 1,5-bisphosphate, the primary event in carbon dioxide fixation, as well as the oxidative fragmentation of the pentose substrate in the photorespiration process. Both reactions occur simultaneously and in competition at the same active site. The sequence is that of Ribulose bisphosphate carboxylase large chain from Polemonium reptans (Greek valerian).